The primary structure comprises 239 residues: Mannose-binding protein A (239 aa).

The N-terminal stretch at 1-18 is a signal peptide; it reads MLLLPLLPVLLCVVSVSS. The segment at 35 to 88 is disordered; it reads ACGRDGRDGPKGEKGEPGQGLRGLQGPPGKLGPPGSVGSPGSPGPKGQKGDHGD. The Collagen-like domain maps to 37–89; it reads GRDGRDGPKGEKGEPGQGLRGLQGPPGKLGPPGSVGSPGSPGPKGQKGDHGDN. The segment covering 38–50 has biased composition (basic and acidic residues); that stretch reads RDGRDGPKGEKGE. Pro44 carries the post-translational modification 4-hydroxyproline. Lys45 and Lys48 each carry 5-hydroxylysine. O-linked (Gal...) hydroxylysine glycosylation is found at Lys45 and Lys48. 4-hydroxyproline occurs at positions 51, 62, 68, 74, and 79. The segment covering 58–74 has biased composition (low complexity); it reads LQGPPGKLGPPGSVGSP. Residues Lys80 and Lys83 each carry the 5-hydroxylysine modification. Residues Lys80 and Lys83 are each glycosylated (O-linked (Gal...) hydroxylysine). The region spanning 144–239 is the C-type lectin domain; sequence SLCTELQGTV…SFKAVCEFPA (96 aa). Intrachain disulfides connect Cys146–Cys235 and Cys213–Cys227. Positions 179, 183, 203, 205, 211, 212, 223, and 224 each coordinate Ca(2+). The calcium-dependent carbohydrate binding stretch occupies residues 203-211; the sequence is EPNNHGSGE.

In terms of assembly, homotrimer. Forms higher oligomeric complexes formed by the association of two, three or more homotrimers. Oligomerization occurs in the endoplasmic reticulum. Interacts with MASP1 and MASP2. Post-translationally, hydroxylated on lysine and proline residues within the collagen-like domain. O-glycosylated. O-linked glycans on hydroxylysine residues consist of Glc-Gal disaccharides bound to the oxygen atom of post-translationally added hydroxyl groups. In terms of tissue distribution, detected in liver and blood serum (at protein level). Detected in liver.

The protein localises to the secreted. Calcium-dependent lectin. Plays a role in the innate immune response by binding mannose, fucose and N-acetylglucosamine moieties on different microorganisms and mediating activation of the lectin complement pathway. Binds to late apoptotic cells, as well as to apoptotic blebs and to necrotic cells, but not to early apoptotic cells, facilitating their uptake by macrophages. The sequence is that of Mannose-binding protein A (Mbl1) from Mus musculus (Mouse).